Consider the following 180-residue polypeptide: Der GTPase-activating protein YihI (180 aa).

2 disordered regions span residues 1-88 and 147-180; these read MTRK…KERR and PEVTEEAPVRKGAKTDEDLLDQFENMDLDSFGKE. Composition is skewed to basic and acidic residues over residues 18-33, 50-67, 77-88, and 153-163; these read FREKSTTQVDVEARKS, EALDPKHYANGQKKDPRL, VEKKPTTKKERR, and APVRKGAKTDE. The segment covering 164–173 has biased composition (acidic residues); that stretch reads DLLDQFENMD.

It belongs to the YihI family. As to quaternary structure, interacts with Der.

A GTPase-activating protein (GAP) that modifies Der/EngA GTPase function. May play a role in ribosome biogenesis. This chain is Der GTPase-activating protein YihI, found in Photobacterium profundum (strain SS9).